The following is a 126-amino-acid chain: Heterotrimeric G protein gamma subunit GPG1 (126 aa).

G proteins are composed of 3 units, alpha, beta and gamma. GPG1 interacts with the beta subunits GBP1 and GPB2.

The protein resides in the cytoplasm. Gamma subunit of a guanine nucleotide-binding protein (G protein). G proteins are involved as modulators or transducers in various transmembrane signaling systems. The beta and gamma chains are required for the GTPase activity, for replacement of GDP by GTP, and for G protein-effector interaction. Involved in the determination of the cAMP level according to nutritional conditions, most probably as a regulator of cAMP phosphodiesterase. Required for the control of pseudohyphal and haploid invasive growth. This is Heterotrimeric G protein gamma subunit GPG1 (GPG1) from Saccharomyces cerevisiae (strain ATCC 204508 / S288c) (Baker's yeast).